A 468-amino-acid chain; its full sequence is Interleukin-9 receptor (468 aa).

An N-terminal signal peptide occupies residues 1–37 (MALGRCIAEGWTLERVAVKQVSWFLIYSWVCSGVCRG). At 38–270 (VSVPEQGGGG…GLLVPRWQWS (233 aa)) the chain is on the extracellular side. Residues asparagine 116 and asparagine 155 are each glycosylated (N-linked (GlcNAc...) asparagine). The 109-residue stretch at 148-256 (PPSDLQSNVS…WSQPVSFPSP (109 aa)) folds into the Fibronectin type-III domain. A WSXWS motif motif is present at residues 244-248 (WSEWS). Residues 271-291 (ASILVVVPIFLLLTGFVHLLF) traverse the membrane as a helical segment. Residues 292 to 468 (KLSPRLKRIF…PVALPVSSRA (177 aa)) are Cytoplasmic-facing. The short motif at 301–309 (FYQNIPSPE) is the Box 1 motif element. A disordered region spans residues 407 to 426 (PQEDWAPLGSARPPPPDSDS).

The protein belongs to the type I cytokine receptor family. Type 4 subfamily. As to quaternary structure, interacts with IL9.

Its subcellular location is the cell membrane. The protein resides in the secreted. Functionally, plays an important role in the immune response against parasites by acting as a receptor of IL9. This chain is Interleukin-9 receptor (Il9r), found in Mus musculus (Mouse).